An 80-amino-acid polypeptide reads, in one-letter code: Defensin-like protein 18 (80 aa).

The signal sequence occupies residues 1 to 29 (MAKFCTTITLILVALVLFADFEAPTIVKA). 4 disulfides stabilise this stretch: cysteine 32–cysteine 80, cysteine 43–cysteine 64, cysteine 49–cysteine 74, and cysteine 53–cysteine 76.

It belongs to the DEFL family.

Its subcellular location is the secreted. In terms of biological role, confers broad-spectrum resistance to pathogens. The sequence is that of Defensin-like protein 18 (PDF1.5) from Arabidopsis thaliana (Mouse-ear cress).